We begin with the raw amino-acid sequence, 485 residues long: Glutamyl-tRNA(Gln) amidotransferase subunit A (485 aa).

Residues Lys-79 and Ser-154 each act as charge relay system in the active site. The active-site Acyl-ester intermediate is the Ser-178.

This sequence belongs to the amidase family. GatA subfamily. In terms of assembly, heterotrimer of A, B and C subunits.

The enzyme catalyses L-glutamyl-tRNA(Gln) + L-glutamine + ATP + H2O = L-glutaminyl-tRNA(Gln) + L-glutamate + ADP + phosphate + H(+). Allows the formation of correctly charged Gln-tRNA(Gln) through the transamidation of misacylated Glu-tRNA(Gln) in organisms which lack glutaminyl-tRNA synthetase. The reaction takes place in the presence of glutamine and ATP through an activated gamma-phospho-Glu-tRNA(Gln). The polypeptide is Glutamyl-tRNA(Gln) amidotransferase subunit A (Staphylococcus aureus).